The following is a 230-amino-acid chain: 7-cyano-7-deazaguanine synthase (230 aa).

An ATP-binding site is contributed by phenylalanine 8–leucine 18. Positions 187, 196, 199, and 202 each coordinate Zn(2+).

The protein belongs to the QueC family. Zn(2+) serves as cofactor.

It catalyses the reaction 7-carboxy-7-deazaguanine + NH4(+) + ATP = 7-cyano-7-deazaguanine + ADP + phosphate + H2O + H(+). The protein operates within purine metabolism; 7-cyano-7-deazaguanine biosynthesis. Its function is as follows. Catalyzes the ATP-dependent conversion of 7-carboxy-7-deazaguanine (CDG) to 7-cyano-7-deazaguanine (preQ(0)). This is 7-cyano-7-deazaguanine synthase from Shewanella amazonensis (strain ATCC BAA-1098 / SB2B).